Reading from the N-terminus, the 264-residue chain is Mitochondrial distribution and morphology protein 12 (264 aa).

Positions 1–232 (MSFDINWNKI…WPSWINLDFN (232 aa)) constitute an SMP-LTD domain. The segment at 240–264 (ESSSSAEESLPHRDDAQDFSADARA) is disordered. Residues 248 to 264 (SLPHRDDAQDFSADARA) are compositionally biased toward basic and acidic residues.

Belongs to the MDM12 family. As to quaternary structure, component of the ER-mitochondria encounter structure (ERMES) or MDM complex, composed of MMM1, MDM10, MDM12 and MDM34. An MMM1 homodimer associates with one molecule of MDM12 on each side in a pairwise head-to-tail manner, and the SMP-LTD domains of MMM1 and MDM12 generate a continuous hydrophobic tunnel for phospholipid trafficking.

It localises to the mitochondrion outer membrane. The protein localises to the endoplasmic reticulum membrane. Component of the ERMES/MDM complex, which serves as a molecular tether to connect the endoplasmic reticulum (ER) and mitochondria. Components of this complex are involved in the control of mitochondrial shape and protein biogenesis, and function in nonvesicular lipid trafficking between the ER and mitochondria. MDM12 is required for the interaction of the ER-resident membrane protein MMM1 and the outer mitochondrial membrane-resident beta-barrel protein MDM10. The MDM12-MMM1 subcomplex functions in the major beta-barrel assembly pathway that is responsible for biogenesis of all mitochondrial outer membrane beta-barrel proteins, and acts in a late step after the SAM complex. The MDM10-MDM12-MMM1 subcomplex further acts in the TOM40-specific pathway after the action of the MDM12-MMM1 complex. Essential for establishing and maintaining the structure of mitochondria and maintenance of mtDNA nucleoids. In Eremothecium gossypii (strain ATCC 10895 / CBS 109.51 / FGSC 9923 / NRRL Y-1056) (Yeast), this protein is Mitochondrial distribution and morphology protein 12.